The chain runs to 445 residues: Phosphoglucosamine mutase (445 aa).

The active-site Phosphoserine intermediate is serine 102. Serine 102, aspartate 241, aspartate 243, and aspartate 245 together coordinate Mg(2+). Phosphoserine is present on serine 102.

Belongs to the phosphohexose mutase family. It depends on Mg(2+) as a cofactor. In terms of processing, activated by phosphorylation.

The enzyme catalyses alpha-D-glucosamine 1-phosphate = D-glucosamine 6-phosphate. Functionally, catalyzes the conversion of glucosamine-6-phosphate to glucosamine-1-phosphate. This Salmonella paratyphi A (strain ATCC 9150 / SARB42) protein is Phosphoglucosamine mutase.